The following is a 416-amino-acid chain: Trehalose synthase (416 aa).

It belongs to the glycosyltransferase group 1 family. Glycosyltransferase 4 subfamily. Homodimer. It depends on Mg(2+) as a cofactor.

The enzyme catalyses an NDP-alpha-D-glucose + D-glucose = alpha,alpha-trehalose + a ribonucleoside 5'-diphosphate + H(+). Inhibited by 20 mM Fe(3+) and Mn(2+). Partially inhibited by Zn(2+) and Ni(2+). Activity is slightly enhanced by 2 mM Fe (3+), Mn (2+), Ca(2+) or Li(+) and by 20 mM Mg(2+), Ca(2+) or Li(+). In terms of biological role, synthesizes trehalose from ADP-glucose and glucose. The reaction is reversible, the equilibrium strongly favors trehalose synthesis. This chain is Trehalose synthase, found in Rubrobacter xylanophilus (strain DSM 9941 / JCM 11954 / NBRC 16129 / PRD-1).